We begin with the raw amino-acid sequence, 475 residues long: MSPKTETKAGVGFKAGVKDYKLTYYTPDYETKDTDILAAFRVTPQPGVPAEEAGAAVAAESSTGTWTTVWTDGLTSLDRYKGRCYHIEPVAGEESQFIAYVAYPLDLFEEGSVTNMFTSIVGNVFGFKALRALRLEDLRIPPAYTKTFLGPPHGIQVERDKLNKYGRPLLGCTIKPKLGLSAKNYGRAVYECLRGGLDFTKDDENVNSQPFMRWRDRFLFCAEAIFKSQAETGEIKGHYLNATAGTCEEMIKRAVFARELGVPIVMHDYLTGGFTANTSLAHYCRDNGLLLHIHRAMHAVIDRQKNHGMHFRVLAKALRMSGGDHIHAGTVVGKLEGEREITLGFVDLLRDDFIEKDRSRGIYFTQDWVSMPGVLPVASGGIHVWHMPALTEIFGDDSVLQFGGGTLGHPWGNAPGAVANRVALEACVQARNEGRNLAREGNEIIREASKWSPELAAACEVWKEIKFEFEAMDTL.

A propeptide spanning residues 1-2 (MS) is cleaved from the precursor. Pro3 is subject to N-acetylproline. Lys14 bears the N6,N6,N6-trimethyllysine mark. Residues Asn123 and Thr173 each coordinate substrate. Lys175 acts as the Proton acceptor in catalysis. Position 177 (Lys177) interacts with substrate. Mg(2+) contacts are provided by Lys201, Asp203, and Glu204. Residue Lys201 is modified to N6-carboxylysine. His294 acts as the Proton acceptor in catalysis. Residues Arg295, His327, and Ser379 each contribute to the substrate site.

This sequence belongs to the RuBisCO large chain family. Type I subfamily. As to quaternary structure, heterohexadecamer of 8 large chains and 8 small chains; disulfide-linked. The disulfide link is formed within the large subunit homodimers. The cofactor is Mg(2+). Post-translationally, the disulfide bond which can form in the large chain dimeric partners within the hexadecamer appears to be associated with oxidative stress and protein turnover.

The protein localises to the plastid. It is found in the chloroplast. The catalysed reaction is 2 (2R)-3-phosphoglycerate + 2 H(+) = D-ribulose 1,5-bisphosphate + CO2 + H2O. It carries out the reaction D-ribulose 1,5-bisphosphate + O2 = 2-phosphoglycolate + (2R)-3-phosphoglycerate + 2 H(+). In terms of biological role, ruBisCO catalyzes two reactions: the carboxylation of D-ribulose 1,5-bisphosphate, the primary event in carbon dioxide fixation, as well as the oxidative fragmentation of the pentose substrate in the photorespiration process. Both reactions occur simultaneously and in competition at the same active site. This Calycanthus floridus var. glaucus (Eastern sweetshrub) protein is Ribulose bisphosphate carboxylase large chain.